A 284-amino-acid polypeptide reads, in one-letter code: MVQIIDGKALAQKMQAALAKKVESLKAEKGIVPGLVVILVGDNPASQVYVRNKERAALAAGFKSETVRLSDSVCQEELIELIEQYNQDDTIHGILVQLPLPHHINDKSIILAIDPKKDVDGFHPMNTGHLWSGRPNMVPCTPAGIMEMFHDYGIELEGKNAVIVGRSNIVGKPMAQLLLDKNATVTLTHSRTRQLAAICRRADILIVAIGQGHFITKDFVKEGAVVIDVGMNRDVNGRLIGDVAFDEVSELASMITPVPGGVGPMTITMLLEQTYQAALRRVSQ.

Residues 165 to 167 (GRS) and S190 contribute to the NADP(+) site.

The protein belongs to the tetrahydrofolate dehydrogenase/cyclohydrolase family. In terms of assembly, homodimer.

It catalyses the reaction (6R)-5,10-methylene-5,6,7,8-tetrahydrofolate + NADP(+) = (6R)-5,10-methenyltetrahydrofolate + NADPH. The catalysed reaction is (6R)-5,10-methenyltetrahydrofolate + H2O = (6R)-10-formyltetrahydrofolate + H(+). It participates in one-carbon metabolism; tetrahydrofolate interconversion. In terms of biological role, catalyzes the oxidation of 5,10-methylenetetrahydrofolate to 5,10-methenyltetrahydrofolate and then the hydrolysis of 5,10-methenyltetrahydrofolate to 10-formyltetrahydrofolate. This Streptococcus equi subsp. zooepidemicus (strain H70) protein is Bifunctional protein FolD.